The following is a 193-amino-acid chain: Putative manganese efflux pump MntP (193 aa).

The next 6 helical transmembrane spans lie at 3–23, 39–59, 65–85, 113–133, 138–158, and 173–193; these read LATL…AALG, VGAY…ALGL, IAAF…GHMV, LALA…GLAV, ILMA…GGVL, and VLGG…HLSA.

Belongs to the MntP (TC 9.B.29) family.

Its subcellular location is the cell inner membrane. Its function is as follows. Probably functions as a manganese efflux pump. The chain is Putative manganese efflux pump MntP from Rhodospirillum rubrum (strain ATCC 11170 / ATH 1.1.1 / DSM 467 / LMG 4362 / NCIMB 8255 / S1).